Here is a 218-residue protein sequence, read N- to C-terminus: Antifreeze protein Maxi (218 aa).

A signal peptide spans 1–23 (MALSLFTVGQFIFLFWTISITEA).

Belongs to the type-I AFP family. As to quaternary structure, homodimer. As to expression, detected in blood serum (at protein level). Detected in liver.

It is found in the secreted. Contributes to protect fish blood from freezing at subzero sea water temperatures. Lowers the blood freezing point by about 1.1 degrees at a concentration of 0.1 mg/ml, and by about 1.5 degrees at a concentration of 0.2 mg/ml. Binds to nascent ice crystals and prevents further growth. This is Antifreeze protein Maxi from Pseudopleuronectes americanus (Winter flounder).